The sequence spans 466 residues: Chromosomal replication initiator protein DnaA (466 aa).

The domain I, interacts with DnaA modulators stretch occupies residues 1–86 (MSLSLWQQCL…EVGTKPVTQT (86 aa)). Positions 86–129 (TLKTPVHNVVAPAQTTTAQPQRVAPAARSGWDNVPAPAEPTYRS) are domain II. The domain III, AAA+ region stretch occupies residues 130 to 346 (NVNVKHTFDN…GALNRVIANA (217 aa)). ATP contacts are provided by G174, G176, K177, and T178. The tract at residues 347 to 466 (NFTGRAITID…FSNLIRTLSS (120 aa)) is domain IV, binds dsDNA.

The protein belongs to the DnaA family. In terms of assembly, oligomerizes as a right-handed, spiral filament on DNA at oriC.

Its subcellular location is the cytoplasm. Plays an essential role in the initiation and regulation of chromosomal replication. ATP-DnaA binds to the origin of replication (oriC) to initiate formation of the DNA replication initiation complex once per cell cycle. Binds the DnaA box (a 9 base pair repeat at the origin) and separates the double-stranded (ds)DNA. Forms a right-handed helical filament on oriC DNA; dsDNA binds to the exterior of the filament while single-stranded (ss)DNA is stabiized in the filament's interior. The ATP-DnaA-oriC complex binds and stabilizes one strand of the AT-rich DNA unwinding element (DUE), permitting loading of DNA polymerase. After initiation quickly degrades to an ADP-DnaA complex that is not apt for DNA replication. Binds acidic phospholipids. In Salmonella agona (strain SL483), this protein is Chromosomal replication initiator protein DnaA.